The sequence spans 359 residues: RNA 3'-terminal phosphate cyclase (359 aa).

Residues Gln-100 and 291 to 294 (HASD) each bind ATP. The active-site Tele-AMP-histidine intermediate is His-317.

Belongs to the RNA 3'-terminal cyclase family. Type 1 subfamily.

The protein localises to the cytoplasm. It catalyses the reaction a 3'-end 3'-phospho-ribonucleotide-RNA + ATP = a 3'-end 2',3'-cyclophospho-ribonucleotide-RNA + AMP + diphosphate. In terms of biological role, catalyzes the conversion of 3'-phosphate to a 2',3'-cyclic phosphodiester at the end of RNA. The mechanism of action of the enzyme occurs in 3 steps: (A) adenylation of the enzyme by ATP; (B) transfer of adenylate to an RNA-N3'P to produce RNA-N3'PP5'A; (C) and attack of the adjacent 2'-hydroxyl on the 3'-phosphorus in the diester linkage to produce the cyclic end product. The biological role of this enzyme is unknown but it is likely to function in some aspects of cellular RNA processing. The polypeptide is RNA 3'-terminal phosphate cyclase (Hyperthermus butylicus (strain DSM 5456 / JCM 9403 / PLM1-5)).